The primary structure comprises 281 residues: Nucleotide-binding protein Patl_0571 (281 aa).

8-15 (GRSGSGKS) is a binding site for ATP. Residue 56–59 (DVRN) coordinates GTP.

This sequence belongs to the RapZ-like family.

Displays ATPase and GTPase activities. The sequence is that of Nucleotide-binding protein Patl_0571 from Pseudoalteromonas atlantica (strain T6c / ATCC BAA-1087).